Reading from the N-terminus, the 508-residue chain is Probable ligand-gated ion channel 46 (508 aa).

The signal sequence occupies residues methionine 1–alanine 18. The Extracellular segment spans residues arginine 19 to tyrosine 274. Asparagine 65, asparagine 134, asparagine 175, and asparagine 201 each carry an N-linked (GlcNAc...) asparagine glycan. Cysteine 190 and cysteine 204 are oxidised to a cystine. A helical transmembrane segment spans residues isoleucine 275–leucine 295. At glycine 296 to proline 301 the chain is on the cytoplasmic side. A helical membrane pass occupies residues alanine 302 to isoleucine 321. At isoleucine 322–aspartate 335 the chain is on the extracellular side. The helical transmembrane segment at valine 336–glycine 356 threads the bilayer. The Cytoplasmic segment spans residues tyrosine 357 to lysine 480. The segment at alanine 374–glutamate 407 is disordered. Residues isoleucine 481–tryptophan 501 traverse the membrane as a helical segment. Over glutamine 502–tyrosine 508 the chain is Extracellular.

This sequence belongs to the ligand-gated ion channel (TC 1.A.9) family. In terms of tissue distribution, expressed in the nervous system, with high expression in cholinergic motor neurons and weak expression in GABAergic motor neurons.

The protein resides in the presynaptic cell membrane. It is found in the cell projection. The protein localises to the axon. It localises to the cytoplasmic vesicle. Its subcellular location is the secretory vesicle. The protein resides in the synaptic vesicle. In terms of biological role, probable component of a ligand-gated anion channel. Negatively regulates synaptic transmission and synaptic vesicle release in response to acetylcholine in cholinergic motor neurons. Role in synaptic vesicle release kinetics may be in association with the ligand-gated ion channel protein acc-4. In Caenorhabditis elegans, this protein is Probable ligand-gated ion channel 46.